The chain runs to 592 residues: BRCA1-associated protein (592 aa).

Residue Ser52 is modified to Phosphoserine. Positions 78-124 (KSNPDELKTTVEERKSSEASPTAQRSKDHSKECINAAPDSPSKQLPD) are disordered. Residues 80–94 (NPDELKTTVEERKSS) are compositionally biased toward basic and acidic residues. 3 positions are modified to phosphoserine: Ser97, Ser117, and Ser119. The RING-type zinc finger occupies 264-304 (CTVCLERMDESVNGILTTLCNHSFHSQCLQRWDDTTCPVCR). A UBP-type; degenerate zinc finger spans residues 301–393 (PVCRYCQTPE…GKIVQYECEG (93 aa)). 8 residues coordinate Zn(2+): Cys317, Cys320, Cys329, Cys332, Cys337, His344, His348, and His354. Residues 429–537 (RIEKDTAEEI…EIQEQLRDVM (109 aa)) adopt a coiled-coil conformation. Positions 565-592 (AMASASSPASSGGSGKLPSRKGRSKRGK) are disordered. Residues 582-592 (PSRKGRSKRGK) show a composition bias toward basic residues.

Interacts with the nuclear localization signal of BRCA1 and with the N-terminal of KSR1. The C-terminal portion of BCRA1 interacts with DDB1. In terms of tissue distribution, expressed in breast epithelial cell lines.

The protein localises to the cytoplasm. The catalysed reaction is S-ubiquitinyl-[E2 ubiquitin-conjugating enzyme]-L-cysteine + [acceptor protein]-L-lysine = [E2 ubiquitin-conjugating enzyme]-L-cysteine + N(6)-ubiquitinyl-[acceptor protein]-L-lysine.. Its pathway is protein modification; protein ubiquitination. Functionally, negatively regulates MAP kinase activation by limiting the formation of Raf/MEK complexes probably by inactivation of the KSR1 scaffold protein. Also acts as a Ras responsive E3 ubiquitin ligase that, on activation of Ras, is modified by auto-polyubiquitination resulting in the release of inhibition of Raf/MEK complex formation. May also act as a cytoplasmic retention protein with a role in regulating nuclear transport. The polypeptide is BRCA1-associated protein (Homo sapiens (Human)).